The following is a 137-amino-acid chain: Small ribosomal subunit protein uS12 (137 aa).

The segment at Met1–Lys57 is disordered. Basic residues predominate over residues Arg9–Lys20. Residue Asp102 is modified to 3-methylthioaspartic acid.

Belongs to the universal ribosomal protein uS12 family. In terms of assembly, part of the 30S ribosomal subunit. Contacts proteins S8 and S17. May interact with IF1 in the 30S initiation complex.

Functionally, with S4 and S5 plays an important role in translational accuracy. Interacts with and stabilizes bases of the 16S rRNA that are involved in tRNA selection in the A site and with the mRNA backbone. Located at the interface of the 30S and 50S subunits, it traverses the body of the 30S subunit contacting proteins on the other side and probably holding the rRNA structure together. The combined cluster of proteins S8, S12 and S17 appears to hold together the shoulder and platform of the 30S subunit. This Streptococcus suis (strain 05ZYH33) protein is Small ribosomal subunit protein uS12.